The chain runs to 488 residues: Ribulose bisphosphate carboxylase large chain 1 (488 aa).

Positions 128 and 178 each coordinate substrate. The Proton acceptor role is filled by lysine 180. Residue lysine 182 participates in substrate binding. Residues lysine 206, aspartate 208, and glutamate 209 each contribute to the Mg(2+) site. Lysine 206 carries the post-translational modification N6-carboxylysine. The active-site Proton acceptor is the histidine 298. Arginine 299, histidine 331, and serine 383 together coordinate substrate.

It belongs to the RuBisCO large chain family. Type I subfamily. In terms of assembly, heterohexadecamer of 8 large chains and 8 small chains. Mg(2+) serves as cofactor.

It catalyses the reaction 2 (2R)-3-phosphoglycerate + 2 H(+) = D-ribulose 1,5-bisphosphate + CO2 + H2O. It carries out the reaction D-ribulose 1,5-bisphosphate + O2 = 2-phosphoglycolate + (2R)-3-phosphoglycerate + 2 H(+). RuBisCO catalyzes two reactions: the carboxylation of D-ribulose 1,5-bisphosphate, the primary event in carbon dioxide fixation, as well as the oxidative fragmentation of the pentose substrate. Both reactions occur simultaneously and in competition at the same active site. This is Ribulose bisphosphate carboxylase large chain 1 from Nitrobacter hamburgensis (strain DSM 10229 / NCIMB 13809 / X14).